Consider the following 482-residue polypeptide: Proline--tRNA ligase (482 aa).

Positions 117, 119, and 148 each coordinate L-proline. ATP-binding residues include Arg148, Glu150, Gln232, and Thr235. Residue His237 coordinates L-proline. ATP is bound at residue Ser269. An interaction with tRNA region spans residues 346 to 376; the sequence is EMRGVPLRVEIGPRDLEKGAAVISRRDTGEK. Cys436, Cys441, Cys464, and Cys467 together coordinate Zn(2+).

The protein belongs to the class-II aminoacyl-tRNA synthetase family. ProS type 3 subfamily. As to quaternary structure, homodimer. The dimer is functionally asymmetric: only one of the two active sites at a time is able to form prolyl-adenylate, and only one tRNA molecule binds per dimer. Interacts with LeuRS, which enhances tRNA(Pro) aminoacylation.

The protein resides in the cytoplasm. The catalysed reaction is tRNA(Pro) + L-proline + ATP = L-prolyl-tRNA(Pro) + AMP + diphosphate. Catalyzes the attachment of proline to tRNA(Pro) in a two-step reaction: proline is first activated by ATP to form Pro-AMP and then transferred to the acceptor end of tRNA(Pro). Can inadvertently accommodate and process cysteine. The protein is Proline--tRNA ligase (proS) of Methanothermobacter thermautotrophicus (strain ATCC 29096 / DSM 1053 / JCM 10044 / NBRC 100330 / Delta H) (Methanobacterium thermoautotrophicum).